A 634-amino-acid polypeptide reads, in one-letter code: DNA-directed RNA polymerase subunit gamma (634 aa).

Residues Cys-74, Cys-76, Cys-89, and Cys-92 each coordinate Zn(2+). Mg(2+)-binding residues include Asp-471, Asp-473, and Asp-475.

It belongs to the RNA polymerase beta' chain family. RpoC1 subfamily. As to quaternary structure, in cyanobacteria the RNAP catalytic core is composed of 2 alpha, 1 beta, 1 beta', 1 gamma and 1 omega subunit. When a sigma factor is associated with the core the holoenzyme is formed, which can initiate transcription. The cofactor is Mg(2+). Requires Zn(2+) as cofactor.

It catalyses the reaction RNA(n) + a ribonucleoside 5'-triphosphate = RNA(n+1) + diphosphate. DNA-dependent RNA polymerase catalyzes the transcription of DNA into RNA using the four ribonucleoside triphosphates as substrates. This is DNA-directed RNA polymerase subunit gamma from Prochlorococcus marinus (strain MIT 9313).